A 672-amino-acid chain; its full sequence is Acetoacetyl-CoA synthetase (672 aa).

Belongs to the ATP-dependent AMP-binding enzyme family.

The protein resides in the cytoplasm. The protein localises to the cytosol. It carries out the reaction acetoacetate + ATP + CoA = acetoacetyl-CoA + AMP + diphosphate. In terms of biological role, activates acetoacetate to acetoacetyl-CoA. In Xenopus tropicalis (Western clawed frog), this protein is Acetoacetyl-CoA synthetase (aacs).